Here is a 348-residue protein sequence, read N- to C-terminus: Short-wave-sensitive opsin 1 (348 aa).

Over 1–33 (MRKMSEEEFYLFKNISSVGPWDGPQYHIAPVWA) the chain is Extracellular. A glycan (N-linked (GlcNAc...) asparagine) is linked at Asn-14. The helical transmembrane segment at 34–58 (FYLQAAFMGTVFLIGFPLNAMVLVA) threads the bilayer. Residues 59–70 (TLRYKKLRQPLN) lie on the Cytoplasmic side of the membrane. Residues 71-96 (YILVNVSFGGFLLCIFSVFPVFVASC) traverse the membrane as a helical segment. Residues 97–110 (NGYFVFGRHVCALE) are Extracellular-facing. A disulfide bridge connects residues Cys-107 and Cys-184. A helical membrane pass occupies residues 111–130 (GFLGTVAGLVTGWSLAFLAF). Over 131–149 (ERYIVICKPFGNFRFSSKH) the chain is Cytoplasmic. A helical membrane pass occupies residues 150–173 (ALTVVLATWTIGIGVSIPPFFGWS). The Extracellular portion of the chain corresponds to 174–199 (RFIPEGLQCSCGPDWYTVGTKYRSES). The helical transmembrane segment at 200 to 227 (YTWFLFIFCFIVPLSLICFSYTQLLRAL) threads the bilayer. The Cytoplasmic segment spans residues 228-249 (KAVAAQQQESATTQKAEREVSR). The helical transmembrane segment at 250–273 (MVVVMVGSFCVCYVPYAAFAMYMV) threads the bilayer. The Extracellular segment spans residues 274-281 (NNRNHGLD). Residues 282-306 (LRLVTIPSFFSKSACIYNPIIYCFM) form a helical membrane-spanning segment. Lys-293 carries the N6-(retinylidene)lysine modification. The Cytoplasmic segment spans residues 307–348 (NKQFQACIMKMVCGKAMTDESDTCSSQKTEVSTVSSTQVGPN).

This sequence belongs to the G-protein coupled receptor 1 family. Opsin subfamily. In terms of processing, phosphorylated on some or all of the serine and threonine residues present in the C-terminal region.

The protein localises to the cell membrane. Its subcellular location is the photoreceptor inner segment. It is found in the cell projection. It localises to the cilium. The protein resides in the photoreceptor outer segment. The protein localises to the cytoplasm. Its subcellular location is the perinuclear region. Visual pigments are the light-absorbing molecules that mediate vision. They consist of an apoprotein, opsin, covalently linked to cis-retinal. Required for the maintenance of cone outer segment organization in the ventral retina, but not essential for the maintenance of functioning cone photoreceptors. Involved in ensuring correct abundance and localization of retinal membrane proteins. May increase spectral sensitivity in dim light. This Pan paniscus (Pygmy chimpanzee) protein is Short-wave-sensitive opsin 1 (OPN1SW).